Here is a 297-residue protein sequence, read N- to C-terminus: MDLTGRRAVVTGGASGLGAETVRALAAAGAEVTIATRHPQSAEPLVQEAAAAGAGRVHAEALDLSDVASVDSFARAWRGPLDILVANAGIMALPTRTLTPYGWEMQLATNYLGHFALATGLHAALRDAGSARIVVVSSGAHLGTPFDFEDPHFARRPYDPWAAYGNSKTADVLFTVGARRWAADGITANALNPGYILTRLQRHVDDETMRAFGVMDDQGNVKPLPYYKTPEQGAATSVLLAASPLLNGVTGRYFEDNQEARTVEDGDVQPGGVAAHALDPEAADRLWEYGADTLSAG.

9 to 33 (VVTGGASGLGAETVRALAAAGAEVT) contacts NAD(+). Position 138 (serine 138) interacts with substrate. Tyrosine 164 (proton acceptor) is an active-site residue.

This sequence belongs to the short-chain dehydrogenases/reductases (SDR) family.

In Streptomyces lividans, this protein is Probable oxidoreductase.